The primary structure comprises 124 residues: MPTFQQLVRSARKPHAKKTKSPALQGCPQRRGVCTRVYTTTPKKPNSALRKVARVRLSSKFEITAYIPGIGHNLQEHSVVLVRGGRVKDLPGVRYHIVRGSLDSIGVKNRNQSRSKYGVKRPKS.

The segment at 1 to 28 (MPTFQQLVRSARKPHAKKTKSPALQGCP) is disordered. Positions 10 to 20 (SARKPHAKKTK) are enriched in basic residues.

Belongs to the universal ribosomal protein uS12 family. In terms of assembly, part of the 30S ribosomal subunit.

Its subcellular location is the plastid. Its function is as follows. With S4 and S5 plays an important role in translational accuracy. Located at the interface of the 30S and 50S subunits. The chain is Small ribosomal subunit protein uS12c (rps12) from Prototheca wickerhamii.